We begin with the raw amino-acid sequence, 361 residues long: KDEL-tailed cysteine endopeptidase CEP2 (361 aa).

Residues methionine 1–glycine 20 form the signal peptide. A propeptide spans phenylalanine 21 to lysine 127 (activation peptide). N-linked (GlcNAc...) asparagine glycans are attached at residues asparagine 75 and asparagine 124. Disulfide bonds link cysteine 149–cysteine 191, cysteine 183–cysteine 224, and cysteine 282–cysteine 333. Residue cysteine 152 is part of the active site. Residues histidine 288 and asparagine 308 contribute to the active site. Positions lysine 358–leucine 361 match the Prevents secretion from ER motif.

Belongs to the peptidase C1 family. As to expression, expressed in roots, stems, rosette and cauline leaves, flowers, buds and green siliques. Found in the tip of young primary leaves, in very young root tips and at later stages in all tissues of lateral root, including the vascular bundle. Not expressed in lateral root primordia, while directly emerging through the epidermis.

The protein resides in the endoplasmic reticulum. Its function is as follows. Involved in the final stage of developmental programmed cell death and in intercalation of new cells. Cleaves extensins, thus probably supporting the final cell collapse. The chain is KDEL-tailed cysteine endopeptidase CEP2 from Arabidopsis thaliana (Mouse-ear cress).